The sequence spans 435 residues: Histidine--tRNA ligase (435 aa).

It belongs to the class-II aminoacyl-tRNA synthetase family.

The protein localises to the cytoplasm. The catalysed reaction is tRNA(His) + L-histidine + ATP = L-histidyl-tRNA(His) + AMP + diphosphate + H(+). The polypeptide is Histidine--tRNA ligase (hisS) (Aeropyrum pernix (strain ATCC 700893 / DSM 11879 / JCM 9820 / NBRC 100138 / K1)).